An 874-amino-acid chain; its full sequence is Probable inorganic carbon transporter subunit DabA (874 aa).

Residues cysteine 398, aspartate 400, histidine 580, and cysteine 595 each coordinate Zn(2+).

The protein belongs to the inorganic carbon transporter (TC 9.A.2) DabA family. In terms of assembly, forms a complex with DabB. Zn(2+) serves as cofactor.

It localises to the cell membrane. In terms of biological role, part of an energy-coupled inorganic carbon pump. The protein is Probable inorganic carbon transporter subunit DabA of Bacillus cytotoxicus (strain DSM 22905 / CIP 110041 / 391-98 / NVH 391-98).